Reading from the N-terminus, the 211-residue chain is FMN-dependent NADH:quinone oxidoreductase (211 aa).

S17–S19 contacts FMN.

Belongs to the azoreductase type 1 family. Homodimer. It depends on FMN as a cofactor.

It carries out the reaction 2 a quinone + NADH + H(+) = 2 a 1,4-benzosemiquinone + NAD(+). The enzyme catalyses N,N-dimethyl-1,4-phenylenediamine + anthranilate + 2 NAD(+) = 2-(4-dimethylaminophenyl)diazenylbenzoate + 2 NADH + 2 H(+). Functionally, quinone reductase that provides resistance to thiol-specific stress caused by electrophilic quinones. Its function is as follows. Also exhibits azoreductase activity. Catalyzes the reductive cleavage of the azo bond in aromatic azo compounds to the corresponding amines. The polypeptide is FMN-dependent NADH:quinone oxidoreductase (Bacillus pumilus (strain SAFR-032)).